The sequence spans 326 residues: ATP-dependent 6-phosphofructokinase (326 aa).

G12 contacts ATP. Residue 22–26 (RAIIK) coordinates ADP. Residues 73-74 (RF) and 103-106 (GDGS) each bind ATP. D104 contributes to the Mg(2+) binding site. 126 to 128 (TID) provides a ligand contact to substrate. Catalysis depends on D128, which acts as the Proton acceptor. R155 lines the ADP pocket. Substrate is bound by residues R163 and 170-172 (MGH). ADP-binding positions include 186–188 (GSE), K212, and 215–217 (KRS). Substrate is bound by residues E224, K246, and 252–255 (HIQR).

The protein belongs to the phosphofructokinase type A (PFKA) family. ATP-dependent PFK group I subfamily. Prokaryotic clade 'B1' sub-subfamily. In terms of assembly, homotetramer. Requires Mg(2+) as cofactor.

The protein localises to the cytoplasm. The enzyme catalyses beta-D-fructose 6-phosphate + ATP = beta-D-fructose 1,6-bisphosphate + ADP + H(+). Its pathway is carbohydrate degradation; glycolysis; D-glyceraldehyde 3-phosphate and glycerone phosphate from D-glucose: step 3/4. With respect to regulation, allosterically activated by ADP and other diphosphonucleosides, and allosterically inhibited by phosphoenolpyruvate. Catalyzes the phosphorylation of D-fructose 6-phosphate to fructose 1,6-bisphosphate by ATP, the first committing step of glycolysis. In Mycoplasmopsis pulmonis (strain UAB CTIP) (Mycoplasma pulmonis), this protein is ATP-dependent 6-phosphofructokinase.